Reading from the N-terminus, the 357-residue chain is Histidine biosynthesis bifunctional protein HisB (357 aa).

A histidinol-phosphatase region spans residues 1–168 (MTPILFIDRD…GIAHALADAP (168 aa)). Residue Asp-8 is the Nucleophile of the active site. The Mg(2+) site is built by Asp-8, Asp-10, and Asp-128. Asp-10 acts as the Proton donor in catalysis. Residues 169 to 357 (RIAVVQRDTK…TALPTTKGAL (189 aa)) are imidazoleglycerol-phosphate dehydratase.

This sequence in the N-terminal section; belongs to the histidinol-phosphatase family. The protein in the C-terminal section; belongs to the imidazoleglycerol-phosphate dehydratase family. Requires Mg(2+) as cofactor.

The protein localises to the cytoplasm. It catalyses the reaction D-erythro-1-(imidazol-4-yl)glycerol 3-phosphate = 3-(imidazol-4-yl)-2-oxopropyl phosphate + H2O. The catalysed reaction is L-histidinol phosphate + H2O = L-histidinol + phosphate. It functions in the pathway amino-acid biosynthesis; L-histidine biosynthesis; L-histidine from 5-phospho-alpha-D-ribose 1-diphosphate: step 6/9. It participates in amino-acid biosynthesis; L-histidine biosynthesis; L-histidine from 5-phospho-alpha-D-ribose 1-diphosphate: step 8/9. This chain is Histidine biosynthesis bifunctional protein HisB, found in Stenotrophomonas maltophilia (strain R551-3).